The following is a 948-amino-acid chain: Zinc finger CCCH domain-containing protein 3 (948 aa).

Disordered regions lie at residues 25 to 108, 121 to 219, 265 to 296, and 336 to 493; these read HGNA…VPQQ, QNVV…RRTV, VDAG…REAS, and NVCK…LKKT. Residues 56-74 are compositionally biased toward basic residues; that stretch reads RPSRRGYSSHHGPSWRKKY. The segment covering 128 to 141 has biased composition (low complexity); that stretch reads KPPSKSGSASASGA. Residues 157-166 show a composition bias toward basic and acidic residues; sequence QRPREGEGEP. A compositionally biased stretch (low complexity) spans 372–398; it reads SAPSKYKWKASSPSASSSSSFRWQSEA. The segment covering 405-415 has biased composition (polar residues); that stretch reads SQLSPVLSRSP. At Ser408 the chain carries Phosphoserine. Positions 441–452 are enriched in basic residues; that stretch reads VKSRTKIIRRRS. C3H1-type zinc fingers lie at residues 667–695, 699–722, 723–749, 750–777, and 778–800; these read EKRK…HDPE, VCTR…HHVS, KEKM…HVYV, SRKA…HTLL, and CPDF…HRTQ. Disordered regions lie at residues 798 to 891 and 913 to 948; these read RTQK…HEAP and ISLQ…KPRL. Residues 834 to 846 are compositionally biased toward polar residues; it reads SASQRPTRQTPSS. Low complexity-rich tracts occupy residues 847 to 856 and 864 to 885; these read AALTAAAVAA and SASP…PPAS. Phosphoserine is present on residues Ser918 and Ser920.

In terms of assembly, interacts with SMAD1, SMAD3, SMAD4, CPSF2 and CPSF3.

It localises to the nucleus. Required for the export of polyadenylated mRNAs from the nucleus. Enhances ACVR1B-induced SMAD-dependent transcription. Binds to single-stranded DNA but not to double-stranded DNA in vitro. Involved in RNA cleavage. This Homo sapiens (Human) protein is Zinc finger CCCH domain-containing protein 3 (ZC3H3).